Reading from the N-terminus, the 262-residue chain is Snake venom serine protease (262 aa).

The N-terminal stretch at 1 to 18 is a signal peptide; it reads MVLIRVLANLLILQLSYA. The propeptide occupies 19-24; that stretch reads QKSSEL. In terms of domain architecture, Peptidase S1 spans 25-253; that stretch reads VIGGDECNIN…YTEWIQSIIA (229 aa). Cystine bridges form between C31–C167, C50–C66, C102–C260, C146–C214, C178–C193, and C204–C229. Residues H65 and D114 each act as charge relay system in the active site. Residues N125 and N158 are each glycosylated (N-linked (GlcNAc...) asparagine). S208 serves as the catalytic Charge relay system.

It belongs to the peptidase S1 family. Snake venom subfamily. Monomer. In terms of tissue distribution, expressed by the venom gland.

The protein localises to the secreted. Functionally, snake venom serine protease that may act in the hemostasis system of the prey. This chain is Snake venom serine protease, found in Crotalus durissus durissus (Central American rattlesnake).